Consider the following 56-residue polypeptide: Large ribosomal subunit protein bL32 (56 aa).

A disordered region spans residues 1–23 (MAVQQNKSTRSKRGMRRSHNALP). Basic residues predominate over residues 9-19 (TRSKRGMRRSH).

This sequence belongs to the bacterial ribosomal protein bL32 family.

The polypeptide is Large ribosomal subunit protein bL32 (Blochmanniella floridana).